A 428-amino-acid chain; its full sequence is 2,3-bisphosphoglycerate-independent phosphoglycerate mutase 2 (428 aa).

It belongs to the BPG-independent phosphoglycerate mutase family. A-PGAM subfamily.

The catalysed reaction is (2R)-2-phosphoglycerate = (2R)-3-phosphoglycerate. It participates in carbohydrate degradation; glycolysis; pyruvate from D-glyceraldehyde 3-phosphate: step 3/5. Catalyzes the interconversion of 2-phosphoglycerate and 3-phosphoglycerate. This chain is 2,3-bisphosphoglycerate-independent phosphoglycerate mutase 2 (apgM2), found in Methanocaldococcus jannaschii (strain ATCC 43067 / DSM 2661 / JAL-1 / JCM 10045 / NBRC 100440) (Methanococcus jannaschii).